An 85-amino-acid polypeptide reads, in one-letter code: Acyl carrier protein ScoB (85 aa).

The region spanning 1-77 (MPAPLTLDGF…QWWQLLSARQ (77 aa)) is the Carrier domain. Residue serine 38 is modified to O-(pantetheine 4'-phosphoryl)serine.

It belongs to the acyl carrier protein (ACP) family. Requires pantetheine 4'-phosphate as cofactor.

It participates in lipid metabolism; fatty acid metabolism. Acyl-carrier protein (ACP) involved in the biosynthesis of a unique class of isonitrile lipopeptides (INLPs). Is the dedicated ACP for the loading of activated acyl groups catalyzed by ScoC. The chain is Acyl carrier protein ScoB from Streptomyces coeruleorubidus.